Here is a 117-residue protein sequence, read N- to C-terminus: Photosystem II reaction center Psb28 protein (117 aa).

This sequence belongs to the Psb28 family. As to quaternary structure, part of the photosystem II complex.

It is found in the cellular thylakoid membrane. The sequence is that of Photosystem II reaction center Psb28 protein from Prochlorococcus marinus subsp. pastoris (strain CCMP1986 / NIES-2087 / MED4).